A 246-amino-acid polypeptide reads, in one-letter code: Acetoacetate decarboxylase (246 aa).

Lysine 116 functions as the Schiff-base intermediate with acetoacetate in the catalytic mechanism.

The protein belongs to the ADC family.

The enzyme catalyses acetoacetate + H(+) = acetone + CO2. Catalyzes the conversion of acetoacetate to acetone and carbon dioxide. The sequence is that of Acetoacetate decarboxylase from Bordetella avium (strain 197N).